A 437-amino-acid chain; its full sequence is MTRKLFIETHGCQMNEYDSSRMVDLLGEHQAMEITENPAEADVILLNTCSIREKAQEKVFSQLGRWRELKQDNPQLVIGVGGCVASQEGAAIRDRAPYVDVVFGPQTLHRLPEMIDAARTTRTPQVDISFPEIEKFDRLPEPRVDGPSAYVSVMEGCSKYCTFCVVPYTRGEEVSRPLADVLAEIVHLAENGVKEVTLLGQNVNGYRHDGHDFADLLHAVAAIDGIGRIRYTTSHPLEFSDAIIQAHADIPQLVKYLHLPVQAGSDRILAAMKRNHTALEYKSRIRRLKAAVPDILISSDFIVGFPGETDKDFEQTMKLIEDVGFDFSYSFVYSARPGTPAADLADDTPEEVKKQRLAILQQRINQQGFENSRRMVGTTQRILVSDYSKKDPGMLQGRTEHNRIVNFRCDNPRLIGQFVDVHIDDALPHSLRGSLLS.

The region spanning 3–120 is the MTTase N-terminal domain; it reads RKLFIETHGC…LPEMIDAART (118 aa). [4Fe-4S] cluster-binding residues include Cys-12, Cys-49, Cys-83, Cys-157, Cys-161, and Cys-164. One can recognise a Radical SAM core domain in the interval 143 to 370; that stretch reads RVDGPSAYVS…QQRINQQGFE (228 aa). A TRAM domain is found at 373–437; sequence RRMVGTTQRI…PHSLRGSLLS (65 aa).

The protein belongs to the methylthiotransferase family. MiaB subfamily. In terms of assembly, monomer. [4Fe-4S] cluster is required as a cofactor.

It localises to the cytoplasm. It catalyses the reaction N(6)-dimethylallyladenosine(37) in tRNA + (sulfur carrier)-SH + AH2 + 2 S-adenosyl-L-methionine = 2-methylsulfanyl-N(6)-dimethylallyladenosine(37) in tRNA + (sulfur carrier)-H + 5'-deoxyadenosine + L-methionine + A + S-adenosyl-L-homocysteine + 2 H(+). Functionally, catalyzes the methylthiolation of N6-(dimethylallyl)adenosine (i(6)A), leading to the formation of 2-methylthio-N6-(dimethylallyl)adenosine (ms(2)i(6)A) at position 37 in tRNAs that read codons beginning with uridine. This is tRNA-2-methylthio-N(6)-dimethylallyladenosine synthase from Stutzerimonas stutzeri (strain A1501) (Pseudomonas stutzeri).